A 476-amino-acid chain; its full sequence is Serine protease HTRA4 (476 aa).

Positions 1–31 (MIRPQLRTAGLGRCLLPGLLLLLVPVLWAGA) are cleaved as a signal peptide. In terms of domain architecture, IGFBP N-terminal spans 36–109 (TQPSCPAVCQ…PGFPSTCGCP (74 aa)). Cystine bridges form between Cys40–Cys66, Cys44–Cys68, Cys49–Cys69, Cys55–Cys72, Cys80–Cys94, Cys88–Cys106, Cys108–Cys127, and Cys116–Cys152. The Kazal-like domain occupies 88–154 (CAPGLQCLQP…VPVQWGNCGD (67 aa)). The tract at residues 202-362 (GSGFIVSEDG…IPSDRVRQFL (161 aa)) is serine protease. Catalysis depends on charge relay system residues His218, Asp248, and Ser326. A PDZ domain is found at 383 to 474 (LQMLSLTVPL…NLLLTVIPET (92 aa)).

It belongs to the peptidase S1C family.

Its subcellular location is the secreted. Functionally, serine protease. This chain is Serine protease HTRA4 (HTRA4), found in Homo sapiens (Human).